The primary structure comprises 486 residues: Glutamate--tRNA ligase (486 aa).

A 'HIGH' region motif is present at residues 11–21 (PSPTGVVHIGN). A 'KMSKS' region motif is present at residues 255–259 (KLSKR). Lys258 lines the ATP pocket.

This sequence belongs to the class-I aminoacyl-tRNA synthetase family. Glutamate--tRNA ligase type 1 subfamily. In terms of assembly, monomer.

The protein localises to the cytoplasm. The catalysed reaction is tRNA(Glu) + L-glutamate + ATP = L-glutamyl-tRNA(Glu) + AMP + diphosphate. Catalyzes the attachment of glutamate to tRNA(Glu) in a two-step reaction: glutamate is first activated by ATP to form Glu-AMP and then transferred to the acceptor end of tRNA(Glu). The polypeptide is Glutamate--tRNA ligase (Streptococcus pneumoniae (strain CGSP14)).